We begin with the raw amino-acid sequence, 472 residues long: Aspartyl/glutamyl-tRNA(Asn/Gln) amidotransferase subunit B (472 aa).

This sequence belongs to the GatB/GatE family. GatB subfamily. Heterotrimer of A, B and C subunits.

The catalysed reaction is L-glutamyl-tRNA(Gln) + L-glutamine + ATP + H2O = L-glutaminyl-tRNA(Gln) + L-glutamate + ADP + phosphate + H(+). It catalyses the reaction L-aspartyl-tRNA(Asn) + L-glutamine + ATP + H2O = L-asparaginyl-tRNA(Asn) + L-glutamate + ADP + phosphate + 2 H(+). Allows the formation of correctly charged Asn-tRNA(Asn) or Gln-tRNA(Gln) through the transamidation of misacylated Asp-tRNA(Asn) or Glu-tRNA(Gln) in organisms which lack either or both of asparaginyl-tRNA or glutaminyl-tRNA synthetases. The reaction takes place in the presence of glutamine and ATP through an activated phospho-Asp-tRNA(Asn) or phospho-Glu-tRNA(Gln). In Campylobacter jejuni subsp. jejuni serotype O:2 (strain ATCC 700819 / NCTC 11168), this protein is Aspartyl/glutamyl-tRNA(Asn/Gln) amidotransferase subunit B.